Reading from the N-terminus, the 60-residue chain is Ribosome modulation factor (60 aa).

Belongs to the ribosome modulation factor family.

The protein resides in the cytoplasm. During stationary phase, converts 70S ribosomes to an inactive dimeric form (100S ribosomes). The chain is Ribosome modulation factor from Kangiella koreensis (strain DSM 16069 / JCM 12317 / KCTC 12182 / SW-125).